The following is a 234-amino-acid chain: Golgi SNAP receptor complex member 1 (234 aa).

Residues 1–212 (MSETWEALRK…MQKIKTKKQK (212 aa)) lie on the Cytoplasmic side of the membrane. A coiled-coil region spans residues 54–121 (VTTEIEGLIE…RDNVDQVLQR (68 aa)). A helical; Anchor for type IV membrane protein membrane pass occupies residues 213–233 (NTMILAGVISACLIFTIFWII). A topological domain (vesicular) is located at residue asparagine 234.

It belongs to the GOSR1 family. In terms of assembly, component of several multiprotein Golgi SNARE complexes.

The protein localises to the golgi apparatus membrane. In terms of biological role, involved in transport from the ER to the Golgi apparatus as well as in intra-Golgi transport. It belongs to a super-family of proteins called t-SNAREs or soluble NSF (N-ethylmaleimide-sensitive factor) attachment protein receptor. Cooperates with ykt-6 for proper expression of Golgi-resident proteins. Required along with ykt-6 for normal embryonic development, seam cell division or differentiation, and ray formation. The chain is Golgi SNAP receptor complex member 1 from Caenorhabditis briggsae.